Here is a 96-residue protein sequence, read N- to C-terminus: Conantokin-E (96 aa).

An N-terminal signal peptide occupies residues 1 to 24; that stretch reads LLVPLVTFHLILGMGTLDHGGALT. Residues 25-72 constitute a propeptide that is removed on maturation; sequence ERRSADATALKPEPVLLQKSDARSTDDNDKDRLTQMKRILKKRGNKAR. The disordered stretch occupies residues 28 to 57; sequence SADATALKPEPVLLQKSDARSTDDNDKDRL. Residues 44 to 57 are compositionally biased toward basic and acidic residues; that stretch reads SDARSTDDNDKDRL. 5 positions are modified to 4-carboxyglutamate: Glu75, Glu76, Glu82, Glu86, and Glu95. Glu82 and Glu86 together coordinate a divalent metal cation. Residues Cys83 and Cys96 are joined by a disulfide bond.

It belongs to the conotoxin B superfamily. As to expression, expressed by the venom duct.

The protein resides in the secreted. Its function is as follows. Conantokins inhibit N-methyl-D-aspartate (NMDA) receptors. This toxin has the highest potency for the NR2B/GRIN2B subunit, followed by NR2A/GRIN2A, NR2C/GRIN2C, and NR2D/GRIN2D subunits. In Conus ermineus (Agate cone), this protein is Conantokin-E.